The chain runs to 363 residues: MAP kinase kinase mkk-4 (363 aa).

The disordered stretch occupies residues 1 to 38; the sequence is MVQEDDENLRNSMSLRPTSLSTRPTSLSVNGNEKTLPE. Residues 14–28 show a composition bias toward low complexity; it reads SLRPTSLSTRPTSLS. Positions 66–330 constitute a Protein kinase domain; that stretch reads LQDLGAIGNG…YDTLKSFDFY (265 aa). Residues 72 to 80 and Lys-95 each bind ATP; that span reads IGNGNFGTV. The Proton acceptor role is filled by Asp-194.

This sequence belongs to the protein kinase superfamily. STE Ser/Thr protein kinase family. MAP kinase kinase subfamily. Expressed in the pharynx, including the corpus, isthmus and terminal bulb.

The protein localises to the cytoplasm. The enzyme catalyses L-seryl-[protein] + ATP = O-phospho-L-seryl-[protein] + ADP + H(+). It carries out the reaction L-threonyl-[protein] + ATP = O-phospho-L-threonyl-[protein] + ADP + H(+). The catalysed reaction is L-tyrosyl-[protein] + ATP = O-phospho-L-tyrosyl-[protein] + ADP + H(+). Its function is as follows. Activity is required in presynaptic neurons, in a dose-dependent manner, for normal presynaptic development and morphology. Plays a role in the formation of muscle connections, also called muscle arm extensions, between the body wall and the motor axons in the dorsal and ventral cord. This is MAP kinase kinase mkk-4 (mkk-4) from Caenorhabditis elegans.